Consider the following 274-residue polypeptide: Probable endonuclease LCL3 (274 aa).

A helical transmembrane segment spans residues 15–32; sequence AVLSIILTGSTLTLIYTY. In terms of domain architecture, TNase-like spans 53–261; sequence HWLYGKVTSV…RSRKKGLWIQ (209 aa). The active site involves R151. Position 156 (D156) interacts with Ca(2+). Active-site residues include E159 and R199.

The protein belongs to the LCL3 family.

It is found in the mitochondrion. Its subcellular location is the membrane. This Saccharomyces cerevisiae (strain Lalvin EC1118 / Prise de mousse) (Baker's yeast) protein is Probable endonuclease LCL3 (LCL3).